A 353-amino-acid polypeptide reads, in one-letter code: S-adenosylmethionine:tRNA ribosyltransferase-isomerase (353 aa).

This sequence belongs to the QueA family. Monomer.

It localises to the cytoplasm. It carries out the reaction 7-aminomethyl-7-carbaguanosine(34) in tRNA + S-adenosyl-L-methionine = epoxyqueuosine(34) in tRNA + adenine + L-methionine + 2 H(+). Its pathway is tRNA modification; tRNA-queuosine biosynthesis. Its function is as follows. Transfers and isomerizes the ribose moiety from AdoMet to the 7-aminomethyl group of 7-deazaguanine (preQ1-tRNA) to give epoxyqueuosine (oQ-tRNA). In Rickettsia bellii (strain RML369-C), this protein is S-adenosylmethionine:tRNA ribosyltransferase-isomerase.